We begin with the raw amino-acid sequence, 92 residues long: Small ribosomal subunit protein uS19 (92 aa).

This sequence belongs to the universal ribosomal protein uS19 family.

Its function is as follows. Protein S19 forms a complex with S13 that binds strongly to the 16S ribosomal RNA. In Borreliella afzelii (strain PKo) (Borrelia afzelii), this protein is Small ribosomal subunit protein uS19.